The following is a 264-amino-acid chain: 3-methyl-2-oxobutanoate hydroxymethyltransferase (264 aa).

2 residues coordinate Mg(2+): D45 and D84. 3-methyl-2-oxobutanoate contacts are provided by residues 45-46, D84, and K112; that span reads DS. Mg(2+) is bound at residue E114. The Proton acceptor role is filled by E181.

Belongs to the PanB family. Homodecamer; pentamer of dimers. Requires Mg(2+) as cofactor.

It is found in the cytoplasm. It carries out the reaction 3-methyl-2-oxobutanoate + (6R)-5,10-methylene-5,6,7,8-tetrahydrofolate + H2O = 2-dehydropantoate + (6S)-5,6,7,8-tetrahydrofolate. It participates in cofactor biosynthesis; (R)-pantothenate biosynthesis; (R)-pantoate from 3-methyl-2-oxobutanoate: step 1/2. Its function is as follows. Catalyzes the reversible reaction in which hydroxymethyl group from 5,10-methylenetetrahydrofolate is transferred onto alpha-ketoisovalerate to form ketopantoate. In Escherichia coli (strain 55989 / EAEC), this protein is 3-methyl-2-oxobutanoate hydroxymethyltransferase.